Reading from the N-terminus, the 188-residue chain is Elongation factor P (188 aa).

It belongs to the elongation factor P family.

It is found in the cytoplasm. It functions in the pathway protein biosynthesis; polypeptide chain elongation. Its function is as follows. Involved in peptide bond synthesis. Stimulates efficient translation and peptide-bond synthesis on native or reconstituted 70S ribosomes in vitro. Probably functions indirectly by altering the affinity of the ribosome for aminoacyl-tRNA, thus increasing their reactivity as acceptors for peptidyl transferase. This is Elongation factor P from Rhodopseudomonas palustris (strain BisB5).